The following is a 162-amino-acid chain: uncharacterized protein (162 aa).

A run of 3 helical transmembrane segments spans residues 28–50, 57–76, and 108–130; these read ALALALLPRSSLLWYLLFAVCFF, LLLLSLVLFGFVVPSFDPWL, and YNTMIAGGLVAGALCYLPCYALA.

Its subcellular location is the cell membrane. This is an uncharacterized protein from Treponema pallidum (strain Nichols).